The chain runs to 301 residues: tRNA-cytidine(32) 2-sulfurtransferase (301 aa).

Residues 55-60 carry the PP-loop motif motif; it reads SGGKDS. [4Fe-4S] cluster is bound by residues cysteine 130, cysteine 133, and cysteine 221.

This sequence belongs to the TtcA family. In terms of assembly, homodimer. It depends on Mg(2+) as a cofactor. The cofactor is [4Fe-4S] cluster.

The protein localises to the cytoplasm. It catalyses the reaction cytidine(32) in tRNA + S-sulfanyl-L-cysteinyl-[cysteine desulfurase] + AH2 + ATP = 2-thiocytidine(32) in tRNA + L-cysteinyl-[cysteine desulfurase] + A + AMP + diphosphate + H(+). Its pathway is tRNA modification. In terms of biological role, catalyzes the ATP-dependent 2-thiolation of cytidine in position 32 of tRNA, to form 2-thiocytidine (s(2)C32). The sulfur atoms are provided by the cysteine/cysteine desulfurase (IscS) system. The chain is tRNA-cytidine(32) 2-sulfurtransferase from Acinetobacter baumannii (strain AB307-0294).